We begin with the raw amino-acid sequence, 500 residues long: Cytochrome P450 71B37 (500 aa).

The chain crosses the membrane as a helical span at residues A2–L22. Residue C440 participates in heme binding.

It belongs to the cytochrome P450 family. Requires heme as cofactor.

The protein resides in the membrane. This Arabidopsis thaliana (Mouse-ear cress) protein is Cytochrome P450 71B37 (CYP71B37).